The following is a 144-amino-acid chain: Large ribosomal subunit protein uL15 (144 aa).

Residues 1 to 57 are disordered; it reads MQLNDLRSAPGARREKHRPGRGIGSGLGKTGGRGHKGLTSRSGGKVAPGFEGGQQPL. The span at 21 to 31 shows a compositional bias: gly residues; sequence RGIGSGLGKTG.

Belongs to the universal ribosomal protein uL15 family. In terms of assembly, part of the 50S ribosomal subunit.

In terms of biological role, binds to the 23S rRNA. This is Large ribosomal subunit protein uL15 from Pseudomonas aeruginosa (strain LESB58).